A 193-amino-acid polypeptide reads, in one-letter code: Recombination protein RecR (193 aa).

The C4-type zinc finger occupies 61-76; that stretch reads CTSCNALSESEVCEIC. A Toprim domain is found at 84-170; it reads SQLCMVLHPR…TFTKIAQGVP (87 aa).

Belongs to the RecR family.

Functionally, may play a role in DNA repair. It seems to be involved in an RecBC-independent recombinational process of DNA repair. It may act with RecF and RecO. This Helicobacter pylori (strain HPAG1) protein is Recombination protein RecR.